We begin with the raw amino-acid sequence, 720 residues long: Glycine--tRNA ligase beta subunit (720 aa).

Belongs to the class-II aminoacyl-tRNA synthetase family. As to quaternary structure, tetramer of two alpha and two beta subunits.

It is found in the cytoplasm. It catalyses the reaction tRNA(Gly) + glycine + ATP = glycyl-tRNA(Gly) + AMP + diphosphate. The sequence is that of Glycine--tRNA ligase beta subunit from Dinoroseobacter shibae (strain DSM 16493 / NCIMB 14021 / DFL 12).